Here is a 246-residue protein sequence, read N- to C-terminus: Complement C1q tumor necrosis factor-related protein 3 (246 aa).

The first 22 residues, 1–22, serve as a signal peptide directing secretion; sequence MLWRQLIYWQLLALFFLPFCLC. Residues 51–113 form the Collagen-like domain; sequence GYQGPPGPPG…KGEKGYPGIP (63 aa). Positions 53–110 are disordered; sequence QGPPGPPGPPGIPGNHGNNGNNGATGHEGAKGEKGDKGDLGPRGERGQHGPKGEKGYP. Residues 55–64 show a composition bias toward pro residues; it reads PPGPPGPPGI. A compositionally biased stretch (low complexity) spans 65 to 74; the sequence is PGNHGNNGNN. Asn70 carries N-linked (GlcNAc...) asparagine glycosylation. Basic and acidic residues predominate over residues 80 to 107; sequence EGAKGEKGDKGDLGPRGERGQHGPKGEK. Residues 113 to 246 form the C1q domain; the sequence is PPELQIAFMA…FAGFLLFETK (134 aa).

Glycosylated on Asn-70. In terms of tissue distribution, expressed in colon and small intestine.

It localises to the secreted. This is Complement C1q tumor necrosis factor-related protein 3 (C1QTNF3) from Homo sapiens (Human).